Here is a 171-residue protein sequence, read N- to C-terminus: ATP synthase subunit b (171 aa).

A helical membrane pass occupies residues 4-24 (IAFFVICVGFPSLIFASASIQ).

It belongs to the ATPase B chain family. F-type ATPases have 2 components, F(1) - the catalytic core - and F(0) - the membrane proton channel. F(1) has five subunits: alpha(3), beta(3), gamma(1), delta(1), epsilon(1). F(0) has three main subunits: a(1), b(2) and c(10-14). The alpha and beta chains form an alternating ring which encloses part of the gamma chain. F(1) is attached to F(0) by a central stalk formed by the gamma and epsilon chains, while a peripheral stalk is formed by the delta and b chains.

The protein localises to the cell inner membrane. Functionally, f(1)F(0) ATP synthase produces ATP from ADP in the presence of a proton or sodium gradient. F-type ATPases consist of two structural domains, F(1) containing the extramembraneous catalytic core and F(0) containing the membrane proton channel, linked together by a central stalk and a peripheral stalk. During catalysis, ATP synthesis in the catalytic domain of F(1) is coupled via a rotary mechanism of the central stalk subunits to proton translocation. Its function is as follows. Component of the F(0) channel, it forms part of the peripheral stalk, linking F(1) to F(0). The sequence is that of ATP synthase subunit b from Helicobacter hepaticus (strain ATCC 51449 / 3B1).